The sequence spans 143 residues: Alpha-S2-casein-like B (143 aa).

An N-terminal signal peptide occupies residues 1–15 (MKFIILTCLLAVALA).

This sequence belongs to the alpha-casein family. Mammary gland specific. Secreted in milk.

The protein localises to the secreted. Its function is as follows. Important role in the capacity of milk to transport calcium phosphate. This Mus musculus (Mouse) protein is Alpha-S2-casein-like B (Csn1s2b).